Here is a 339-residue protein sequence, read N- to C-terminus: Fructose-1,6-bisphosphatase class 1 (339 aa).

Residues Glu94, Asp116, Leu118, and Asp119 each coordinate Mg(2+). Residues 119–122, Asn210, and Lys276 each bind substrate; that span reads DGSS. Mg(2+) is bound at residue Glu282.

Belongs to the FBPase class 1 family. Homotetramer. Mg(2+) is required as a cofactor.

It localises to the cytoplasm. It carries out the reaction beta-D-fructose 1,6-bisphosphate + H2O = beta-D-fructose 6-phosphate + phosphate. It functions in the pathway carbohydrate biosynthesis; gluconeogenesis. In Burkholderia ambifaria (strain MC40-6), this protein is Fructose-1,6-bisphosphatase class 1.